We begin with the raw amino-acid sequence, 356 residues long: Alanine racemase (356 aa).

The Proton acceptor; specific for D-alanine role is filled by lysine 35. N6-(pyridoxal phosphate)lysine is present on lysine 35. Position 130 (arginine 130) interacts with substrate. Tyrosine 253 acts as the Proton acceptor; specific for L-alanine in catalysis. Residue methionine 301 participates in substrate binding.

The protein belongs to the alanine racemase family. The cofactor is pyridoxal 5'-phosphate.

The enzyme catalyses L-alanine = D-alanine. Its pathway is amino-acid biosynthesis; D-alanine biosynthesis; D-alanine from L-alanine: step 1/1. Its function is as follows. Catalyzes the interconversion of L-alanine and D-alanine. May also act on other amino acids. The protein is Alanine racemase (alr) of Sodalis glossinidius (strain morsitans).